The following is an 857-amino-acid chain: DNA mismatch repair protein MutS (857 aa).

603-610 (GPNMAGKS) is an ATP binding site.

Belongs to the DNA mismatch repair MutS family.

This protein is involved in the repair of mismatches in DNA. It is possible that it carries out the mismatch recognition step. This protein has a weak ATPase activity. The polypeptide is DNA mismatch repair protein MutS (Methanothrix thermoacetophila (strain DSM 6194 / JCM 14653 / NBRC 101360 / PT) (Methanosaeta thermophila)).